The chain runs to 137 residues: MSSNKVTITEVAKHAGVSVTTVSMVLGNKGRISPDTIEKVNASVEALGYIRNRAAANLRSNSSEIIGLILKDISDPYDAEVTAGLSEEIEQQGYMLFLAQCGDSQEKFEHCVLTMARQGVGGIAFCSIGENQQLNVD.

The 55-residue stretch at 6–60 folds into the HTH lacI-type domain; the sequence is VTITEVAKHAGVSVTTVSMVLGNKGRISPDTIEKVNASVEALGYIRNRAAANLRS. Residues 8 to 27 constitute a DNA-binding region (H-T-H motif); that stretch reads ITEVAKHAGVSVTTVSMVLG.

In terms of biological role, repressor for the malX and malY genes. The protein is Maltose regulon regulatory protein MalI (malI) of Vibrio furnissii.